A 1170-amino-acid chain; its full sequence is DNA excision repair protein ERCC-5 (1170 aa).

Residues 1 to 78 (MGVQGLWKLL…RIRPIFVFDG (78 aa)) form an N-domain region. The residue at position 8 (Lys-8) is an N6-acetyllysine. A Mg(2+)-binding site is contributed by Asp-30. The segment at 31–67 (ISIWLNQALKGVRDSHGNVIENAHLLTLFHRLCKLLF) is DNA-binding; may bind to the undamaged single-strand DNA of the DNA repair bubble. Asp-77 is a Mg(2+) binding site. A spacer region region spans residues 79-784 (DAPLLKKQTL…LRLFGVPYIQ (706 aa)). Disordered stretches follow at residues 304–479 (DSES…RCDT), 520–587 (HVSG…PKAC), and 600–701 (LENA…ECLL). A compositionally biased stretch (low complexity) spans 306–323 (ESLPSSSNVHSVSSNLKS). Composition is skewed to basic and acidic residues over residues 324–336 (SPHEKVKPEREPE) and 363–373 (SREGRQSKERN). The residue at position 384 (Ser-384) is a Phosphoserine. The span at 455-474 (TSGSSANGQTDSAHSFTTAS) shows a compositional bias: polar residues. Basic and acidic residues predominate over residues 539-551 (THSDQGIDIHPED). Residues 659 to 676 (SVVSNSELQTESSEASTH) are compositionally biased toward polar residues. Residues 677–698 (LSEKDAEEPRETLEEGTSRDTE) are compositionally biased toward basic and acidic residues. Ser-704 and Ser-705 each carry phosphoserine. The I-domain stretch occupies residues 785 to 880 (APMEAEAQCA…VTAMEILNEF (96 aa)). 4 residues coordinate Mg(2+): Glu-788, Glu-790, Asp-809, and Asp-811. Residues 819–835 (HVYKNFFNKNKFVEYYQ) form a DNA-binding; may bind to the undamaged single-strand DNA of the DNA repair bubble region. The tract at residues 847 to 879 (RNKLINLAYLLGSDYTEGIPTVGCVTAMEILNE) is DNA-binding; H2TH (helix-2turn-helix) motif which binds double-stranded DNA. Residue Asp-860 participates in Mg(2+) binding. A DNA-binding; may bind double-stranded DNA region spans residues 911–917 (TKVKKKL). The interval 980–1008 (LKHLNAHQTQLRIDSFFRLAQQEKQDAKL) is interaction with PCNA. The tract at residues 1010 to 1170 (KSHRLNRAVT…KSMKRRKKKT (161 aa)) is interaction with ERCC6/CSB. The interval 1033–1146 (LTKVTEALDD…DDEDKAKTVL (114 aa)) is disordered. Basic and acidic residues predominate over residues 1041–1060 (DDAKGKTQKRELPYKKETSV). Residues 1049–1065 (KRELPYKKETSVPKRRR) carry the Nuclear localization signal 1 motif. The segment covering 1094–1110 (SVMSARQRSAAESSKIS) has biased composition (polar residues). The short motif at 1153 to 1170 (FGKKKLKLKSMKRRKKKT) is the Nuclear localization signal 2 element.

It belongs to the XPG/RAD2 endonuclease family. XPG subfamily. As to quaternary structure, monomer. Homodimer. Component of the homologous recombination repair (HR) complex composed of ERCC5/XPG, BRCA2, PALB2, DSS1 and RAD51. Within the complex, interacts with BRCA2 and PALB2. Interacts with RNA polymerase II. Interacts (via C-terminus) with ERCC6/CSB; the interaction stimulates ERCC6/CSB binding to the DNA repair bubble and ERCC6/CSB ATPase activity. May form a complex composed of RNA polymerase II, ERCC6/CSB and ERCC5/XPG which associates with the DNA repair bubble during transcription-coupled nucleotide excision repair. Interacts with BRCA1; the interaction promotes the release of BRCA1 from DNA. Interacts with PCNA. Interacts with NTHL1; the interaction stimulates NTHL1 activity and NTHL1 binding to its DNA substrate. It depends on Mg(2+) as a cofactor.

The protein localises to the nucleus. Its subcellular location is the chromosome. Functionally, single-stranded structure-specific DNA endonuclease involved in DNA excision repair. Makes the 3'incision in DNA nucleotide excision repair (NER). Binds and bends DNA repair bubble substrate and breaks base stacking at the single-strand/double-strand DNA junction of the DNA bubble. Plays a role in base excision repair (BER) by promoting the binding of DNA glycosylase NTHL1 to its substrate and increasing NTHL1 catalytic activity that removes oxidized pyrimidines from DNA. Involved in transcription-coupled nucleotide excision repair (TCR) which allows RNA polymerase II-blocking lesions to be rapidly removed from the transcribed strand of active genes. Functions during the initial step of TCR in cooperation with ERCC6/CSB to recognized stalled RNA polymerase II. Also, stimulates ERCC6/CSB binding to the DNA repair bubble and ERCC6/CSB ATPase activity. Required for DNA replication fork maintenance and preservation of genomic stability. Involved in homologous recombination repair (HRR) induced by DNA replication stress by recruiting RAD51, BRCA2, and PALB2 to the damaged DNA site. During HRR, binds to the replication fork with high specificity and stabilizes it. Also, acts upstream of HRR, to promote the release of BRCA1 from DNA. The chain is DNA excision repair protein ERCC-5 (Ercc5) from Mus musculus (Mouse).